Here is a 131-residue protein sequence, read N- to C-terminus: Small ribosomal subunit protein uS9 (131 aa).

It belongs to the universal ribosomal protein uS9 family.

The protein is Small ribosomal subunit protein uS9 of Haemophilus ducreyi (strain 35000HP / ATCC 700724).